A 207-amino-acid chain; its full sequence is Putative 3-methyladenine DNA glycosylase (207 aa).

Belongs to the DNA glycosylase MPG family.

This Burkholderia cenocepacia (strain HI2424) protein is Putative 3-methyladenine DNA glycosylase.